Reading from the N-terminus, the 95-residue chain is Protein translocase subunit SecE (95 aa).

The disordered stretch occupies residues 1 to 35 (MTDAVGSIDMPDAEDEAPESKKKSRKGGKRGKKGP). Residues 22 to 35 (KKSRKGGKRGKKGP) show a composition bias toward basic residues. Residues 67 to 87 (VVIVFVVVMIGLVTVLDIGFA) traverse the membrane as a helical segment.

The protein belongs to the SecE/SEC61-gamma family. Component of the Sec protein translocase complex. Heterotrimer consisting of SecY, SecE and SecG subunits. The heterotrimers can form oligomers, although 1 heterotrimer is thought to be able to translocate proteins. Interacts with the ribosome. Interacts with SecDF, and other proteins may be involved. Interacts with SecA.

The protein localises to the cell membrane. Its function is as follows. Essential subunit of the Sec protein translocation channel SecYEG. Clamps together the 2 halves of SecY. May contact the channel plug during translocation. The sequence is that of Protein translocase subunit SecE from Streptomyces griseus.